A 1241-amino-acid polypeptide reads, in one-letter code: ATP-dependent helicase/nuclease subunit A (1241 aa).

The 474-residue stretch at 12–485 folds into the UvrD-like helicase ATP-binding domain; sequence SQWTDDQWKA…IDLAKNFRSR (474 aa). 33–40 serves as a coordination point for ATP; the sequence is AAAGSGKT. A UvrD-like helicase C-terminal domain is found at 505 to 805; it reads GEIDYDADAE…RIMTIHKSKG (301 aa).

The protein belongs to the helicase family. AddA subfamily. In terms of assembly, heterodimer of AddA and AddB/RexB. The cofactor is Mg(2+).

It carries out the reaction Couples ATP hydrolysis with the unwinding of duplex DNA by translocating in the 3'-5' direction.. The catalysed reaction is ATP + H2O = ADP + phosphate + H(+). Functionally, the heterodimer acts as both an ATP-dependent DNA helicase and an ATP-dependent, dual-direction single-stranded exonuclease. Recognizes the chi site generating a DNA molecule suitable for the initiation of homologous recombination. The AddA nuclease domain is required for chi fragment generation; this subunit has the helicase and 3' -&gt; 5' nuclease activities. This is ATP-dependent helicase/nuclease subunit A from Bacillus cereus (strain Q1).